Here is a 581-residue protein sequence, read N- to C-terminus: mRNA-decapping enzyme 1B (581 aa).

Ser-145 carries the post-translational modification Phosphoserine. 2 disordered regions span residues Gln-181 to Gln-222 and Ala-236 to Phe-258. The span at Gly-204 to Pro-219 shows a compositional bias: polar residues. Low complexity predominate over residues Pro-244 to Pro-255. Residues Ser-269 and Ser-326 each carry the phosphoserine modification. Residues Ala-349 to Val-411 are disordered. Over residues Pro-355–Pro-367 the composition is skewed to low complexity. Thr-366 carries the phosphothreonine modification. Polar residues predominate over residues Val-368 to Pro-381. Residues Pro-382–Gly-401 show a composition bias toward pro residues. Position 412 is a phosphoserine (Ser-412). Residues Gln-427–Ala-468 form a disordered region. Phosphoserine is present on Ser-475. The segment at Ser-498–Thr-522 is disordered.

This sequence belongs to the DCP1 family. As to quaternary structure, interacts with DCP1A.

The protein localises to the cytoplasm. The protein resides in the nucleus. The enzyme catalyses a 5'-end (N(7)-methyl 5'-triphosphoguanosine)-ribonucleoside in mRNA + H2O = N(7)-methyl-GDP + a 5'-end phospho-ribonucleoside in mRNA + 2 H(+). May play a role in the degradation of mRNAs, both in normal mRNA turnover and in nonsense-mediated mRNA decay. May remove the 7-methyl guanine cap structure from mRNA molecules, yielding a 5'-phosphorylated mRNA fragment and 7m-GDP. The chain is mRNA-decapping enzyme 1B (DCP1B) from Bos taurus (Bovine).